The primary structure comprises 763 residues: Formin-like protein 4 (763 aa).

The first 33 residues, 1–33, serve as a signal peptide directing secretion; it reads MAAMLMQPWPPFLPHLTLVFLTLILFFPNQSFS. Residues 52–73 are disordered; the sequence is PPVQSPVLSPPQNPSSSSSDSD. The helical transmembrane segment at 80–100 threads the bilayer; sequence AVLITAASTLLVAAVFFFLVH. Disordered stretches follow at residues 185-327 and 726-763; these read IYSK…DSDH and RSSMGSTQQRNAVKFPVLPPNFMSDRSRSDSGGSDSDM. The segment covering 205–225 has biased composition (polar residues); that stretch reads RSSTSHSVIHNDNYRNATTTH. Residues 229–238 show a composition bias toward basic and acidic residues; it reads VKTDSFEFVK. A compositionally biased stretch (pro residues) spans 240 to 280; that stretch reads DPTPPPPPPPPIPVKQSATPPPPPPPKLKNNGPSPPPPPPL. Low complexity predominate over residues 281–292; that stretch reads KKTAALSSSASK. The 436-residue stretch at 303–738 folds into the FH2 domain; it reads SGESSNGQVK…MGSTQQRNAV (436 aa). A compositionally biased stretch (basic and acidic residues) spans 316-327; it reads LHWDKVNPDSDH. Residues 726-736 are compositionally biased toward polar residues; it reads RSSMGSTQQRN.

The protein belongs to the formin-like family. Class-I subfamily. Interacts with profilin. As to expression, expressed in the whole plant (at protein level).

Its subcellular location is the cell membrane. Might be involved in the organization and polarity of the actin cytoskeleton. In Arabidopsis thaliana (Mouse-ear cress), this protein is Formin-like protein 4 (FH4).